A 554-amino-acid polypeptide reads, in one-letter code: Membrane protein insertase YidC (554 aa).

A run of 5 helical transmembrane segments spans residues 7–24 (VLWV…DNWQ), 362–382 (FVGN…AVFF), 436–456 (LPVV…LASV), 475–495 (PFFI…SLNP), and 510–530 (PIAF…YYVV).

Belongs to the OXA1/ALB3/YidC family. Type 1 subfamily. As to quaternary structure, interacts with the Sec translocase complex via SecD. Specifically interacts with transmembrane segments of nascent integral membrane proteins during membrane integration.

The protein resides in the cell inner membrane. Its function is as follows. Required for the insertion and/or proper folding and/or complex formation of integral membrane proteins into the membrane. Involved in integration of membrane proteins that insert both dependently and independently of the Sec translocase complex, as well as at least some lipoproteins. Aids folding of multispanning membrane proteins. The chain is Membrane protein insertase YidC from Burkholderia ambifaria (strain MC40-6).